Consider the following 819-residue polypeptide: Nonribosomal peptide synthetase 9 (819 aa).

An adenylation (A) domain region spans residues 202–591 (LQAPTQHAVR…GRKDTQAKIR (390 aa)). A Carrier domain is found at 722 to 798 (QPRNERERLI…SLAEFLSSSS (77 aa)). Serine 759 carries the O-(pantetheine 4'-phosphoryl)serine modification.

Belongs to the NRP synthetase family.

It functions in the pathway secondary metabolite biosynthesis. Nonribosomal peptide synthetase; part of the Fg3_54/C64 gene cluster that mediates the biosynthesis of the octapeptide fusaoctaxin A, a virulence factor that is required for cell-to-cell invasiveness of plant host. The 2 nonribosomal peptide synthetases NRPS9 and NRPS5 form an assembly line which likely utilizes GABA as a starter unit (loaded on the unique module M1 of NRPS9) and sequentially incorporates seven extender units composed of the residues L-Ala, L-allo-Ile, L-Ser, L-Val, L-Ser, L-Leu and L-Leu, respectively. During the process, each of the residues that are tethered on modules M3-M7 of NRPS5 containing an E domain can undergo an epimerization reaction to produce a D-configuration before the transpeptidation reaction occurs. The elongation of the peptidyl chain might be terminated by module M8-mediated L-Leu incorporation, followed by R domain-catalyzed 4 electron reduction to release the resulting octapeptide from the assembly line as an alcohol. Fusaoctaxin A is cleaved by the cluster specific ABC transporter FGM5 to the pentapeptide fusapentaxin A and the tripeptide fusatrixin A. The other enzymes from the cluster, FGM1, FGM2, FGM3 and FGM9 seem not to be involved in the biosynthesis of fusaoctaxin A and their functions have still to be determined. This is Nonribosomal peptide synthetase 9 from Gibberella zeae (strain ATCC MYA-4620 / CBS 123657 / FGSC 9075 / NRRL 31084 / PH-1) (Wheat head blight fungus).